Consider the following 425-residue polypeptide: uncharacterized protein (425 aa).

The region spanning 55–181 (RYSHSLGVYE…DLDADRMDYL (127 aa)) is the HD domain.

This is an uncharacterized protein from Mycoplasma pneumoniae (strain ATCC 29342 / M129 / Subtype 1) (Mycoplasmoides pneumoniae).